Consider the following 202-residue polypeptide: Endothelin-1 (202 aa).

A signal peptide spans 1–25; it reads MDYLPVLFSLLLVVFQGAPEAAVLG. Residues 26–50 constitute a propeptide that is removed on maturation; the sequence is AELSTGPDSGGEKPAPSAPWRPRRS. The disordered stretch occupies residues 28 to 48; it reads LSTGPDSGGEKPAPSAPWRPR. 2 disulfides stabilise this stretch: cysteine 53/cysteine 67 and cysteine 55/cysteine 63. Positions 74–202 are excised as a propeptide; that stretch reads VNTPEHIVPY…EKKVTHNRTH (129 aa). The interval 110–124 is endothelin-like; sequence CQCASQKDKKCWTFC.

This sequence belongs to the endothelin/sarafotoxin family.

The protein localises to the secreted. Functionally, endothelins are endothelium-derived vasoconstrictor peptides. Probable ligand for G-protein coupled receptors EDNRA and EDNRB which activates PTK2B, BCAR1, BCAR3 and, GTPases RAP1 and RHOA cascade in glomerular mesangial cells. Also binds the DEAR/FBXW7-AS1 receptor. Promotes mesenteric arterial wall remodeling via activation of ROCK signaling and subsequent colocalization of NFATC3 with F-actin filaments. NFATC3 then translocates to the nucleus where it subsequently promotes the transcription of the smooth muscle hypertrophy and differentiation marker ACTA2. The protein is Endothelin-1 (EDN1) of Felis catus (Cat).